The following is a 317-amino-acid chain: Methionyl-tRNA formyltransferase (317 aa).

112–115 (SLLP) provides a ligand contact to (6S)-5,6,7,8-tetrahydrofolate.

The protein belongs to the Fmt family.

The enzyme catalyses L-methionyl-tRNA(fMet) + (6R)-10-formyltetrahydrofolate = N-formyl-L-methionyl-tRNA(fMet) + (6S)-5,6,7,8-tetrahydrofolate + H(+). Its function is as follows. Attaches a formyl group to the free amino group of methionyl-tRNA(fMet). The formyl group appears to play a dual role in the initiator identity of N-formylmethionyl-tRNA by promoting its recognition by IF2 and preventing the misappropriation of this tRNA by the elongation apparatus. The chain is Methionyl-tRNA formyltransferase from Mycobacterium avium (strain 104).